Here is a 681-residue protein sequence, read N- to C-terminus: PTS system glucose-specific EIICBA component (681 aa).

The 412-residue stretch at 3 to 414 (KKLFGQLQRI…LKYKTPGRED (412 aa)) folds into the PTS EIIC type-1 domain. 10 consecutive transmembrane segments (helical) span residues 16-36 (LMLPVAILPAAGLLLAIGTAI), 73-93 (MIFALGVAIGLAGGDGVAAIA), 126-146 (ILGIPTLQTGVFGGIIIGALA), 170-190 (FVPIMMATTSFILAFPMALIW), 199-219 (AFSTGLLDSNTGVAVFLFGFI), 273-293 (FMQGEFPVMMFGLPAAALAIY), 303-323 (VVAGLMGSAALTSFLTGITEP), 328-348 (FLFVAPLLFFIHAVLDGLSFL), 355-375 (VHLGYTFSGGFIDYVLLGVLP), and 383-403 (VIPVGLVYAVIYYFVFRFLIV). The PTS EIIB type-1 domain occupies 425–506 (TELPYAVLEA…QQIMNGQVVE (82 aa)). The active-site Phosphocysteine intermediate; for EIIB activity is the Cys-447. In terms of domain architecture, PTS EIIA type-1 spans 551–655 (DQVFSEKMMG…SDITPIIVTQ (105 aa)). Residue His-603 is the Tele-phosphohistidine intermediate; for EIIA activity of the active site.

The protein resides in the cell membrane. It catalyses the reaction N(pros)-phospho-L-histidyl-[protein] + D-glucose(out) = D-glucose 6-phosphate(in) + L-histidyl-[protein]. Its function is as follows. The phosphoenolpyruvate-dependent sugar phosphotransferase system (sugar PTS), a major carbohydrate active transport system, catalyzes the phosphorylation of incoming sugar substrates concomitantly with their translocation across the cell membrane. This system is involved in glucose transport. In Staphylococcus aureus (strain JH9), this protein is PTS system glucose-specific EIICBA component (ptsG).